The following is a 63-amino-acid chain: Large ribosomal subunit protein uL30 (63 aa).

The protein belongs to the universal ribosomal protein uL30 family. Part of the 50S ribosomal subunit.

This chain is Large ribosomal subunit protein uL30, found in Rickettsia prowazekii (strain Madrid E).